The following is a 214-amino-acid chain: Adenylate kinase (214 aa).

10–15 (GAGKGT) is a binding site for ATP. Positions 30 to 59 (STGDMFRAAVKNETPLGLEAKSYMDKGHLV) are NMP. AMP-binding positions include threonine 31, arginine 36, 57–59 (HLV), 85–88 (GFPR), and glutamine 92. The interval 126–163 (GRWICPVCGASYHTMFNPPKEAGVCDKDGGKLYQREDD) is LID. Arginine 127 is a binding site for ATP. Residues cysteine 130 and cysteine 133 each coordinate Zn(2+). Position 136 to 137 (136 to 137 (SY)) interacts with ATP. Zn(2+)-binding residues include cysteine 150 and aspartate 153. Arginine 160 and arginine 171 together coordinate AMP. Glutamine 199 lines the ATP pocket.

It belongs to the adenylate kinase family. Monomer.

The protein resides in the cytoplasm. It carries out the reaction AMP + ATP = 2 ADP. It participates in purine metabolism; AMP biosynthesis via salvage pathway; AMP from ADP: step 1/1. In terms of biological role, catalyzes the reversible transfer of the terminal phosphate group between ATP and AMP. Plays an important role in cellular energy homeostasis and in adenine nucleotide metabolism. This Brevibacillus brevis (strain 47 / JCM 6285 / NBRC 100599) protein is Adenylate kinase.